The chain runs to 98 residues: NADH-ubiquinone oxidoreductase chain 4L (98 aa).

Helical transmembrane passes span 1–21 (MSMV…GLLM), 29–49 (SLLC…LMIL), and 61–81 (IILL…LVMI).

This sequence belongs to the complex I subunit 4L family. Core subunit of respiratory chain NADH dehydrogenase (Complex I) which is composed of 45 different subunits.

Its subcellular location is the mitochondrion inner membrane. It catalyses the reaction a ubiquinone + NADH + 5 H(+)(in) = a ubiquinol + NAD(+) + 4 H(+)(out). In terms of biological role, core subunit of the mitochondrial membrane respiratory chain NADH dehydrogenase (Complex I) which catalyzes electron transfer from NADH through the respiratory chain, using ubiquinone as an electron acceptor. Part of the enzyme membrane arm which is embedded in the lipid bilayer and involved in proton translocation. In Vicugna pacos (Alpaca), this protein is NADH-ubiquinone oxidoreductase chain 4L (MT-ND4L).